The sequence spans 367 residues: Tubulin-like protein CetZ (367 aa).

GTP contacts are provided by residues 11–15, Ser111, 115–117, Glu148, Asn176, and Asn194; these read QCGNR and GTG.

The protein belongs to the CetZ family.

It localises to the cytoplasm. Involved in cell shape control. The protein is Tubulin-like protein CetZ of Methanothrix thermoacetophila (strain DSM 6194 / JCM 14653 / NBRC 101360 / PT) (Methanosaeta thermophila).